The chain runs to 338 residues: Glycerol-3-phosphate dehydrogenase [NAD(P)+] (338 aa).

NADPH is bound by residues serine 13, tryptophan 14, and lysine 108. Sn-glycerol 3-phosphate contacts are provided by lysine 108, glycine 139, and serine 141. Alanine 143 lines the NADPH pocket. Residues lysine 194, aspartate 247, serine 257, arginine 258, and asparagine 259 each contribute to the sn-glycerol 3-phosphate site. Lysine 194 serves as the catalytic Proton acceptor. Residue arginine 258 coordinates NADPH. NADPH-binding residues include valine 282 and glutamate 284.

Its subcellular location is the cytoplasm. It catalyses the reaction sn-glycerol 3-phosphate + NAD(+) = dihydroxyacetone phosphate + NADH + H(+). The catalysed reaction is sn-glycerol 3-phosphate + NADP(+) = dihydroxyacetone phosphate + NADPH + H(+). It functions in the pathway membrane lipid metabolism; glycerophospholipid metabolism. Functionally, catalyzes the reduction of the glycolytic intermediate dihydroxyacetone phosphate (DHAP) to sn-glycerol 3-phosphate (G3P), the key precursor for phospholipid synthesis. The polypeptide is Glycerol-3-phosphate dehydrogenase [NAD(P)+] (Streptococcus pyogenes serotype M6 (strain ATCC BAA-946 / MGAS10394)).